A 201-amino-acid chain; its full sequence is MALHDENVVWHSHPVTVQQRELHHCHRGVVLWFTGLSGSGKSTVAGALEEALHKLGVSTYLLDGDNVRHGLCSDLGFSDADRKENIRRVGEVANLMVEAGLVVLTAFISPHRAERQMVRERVGEGRFIEVFVDTPLAICEARDPKGLYKKARAGELRNFTGIDSVYEAPESAEIHLNGEQLVTNLVQQLLDLLRQNDIIRS.

35–42 is an ATP binding site; sequence GLSGSGKS. Residue Ser-109 is the Phosphoserine intermediate of the active site.

The protein belongs to the APS kinase family.

The enzyme catalyses adenosine 5'-phosphosulfate + ATP = 3'-phosphoadenylyl sulfate + ADP + H(+). It functions in the pathway sulfur metabolism; hydrogen sulfide biosynthesis; sulfite from sulfate: step 2/3. Its function is as follows. Catalyzes the synthesis of activated sulfate. In Shigella boydii serotype 18 (strain CDC 3083-94 / BS512), this protein is Adenylyl-sulfate kinase.